The chain runs to 437 residues: tRNA-2-methylthio-N(6)-dimethylallyladenosine synthase (437 aa).

The region spanning 5–121 is the MTTase N-terminal domain; that stretch reads KKLYIKTYGC…LPELTARAAT (117 aa). Cys-14, Cys-50, Cys-84, Cys-159, Cys-163, and Cys-166 together coordinate [4Fe-4S] cluster. The Radical SAM core domain occupies 145–371; the sequence is AKRGPTAFLT…QALLTRQQRA (227 aa). In terms of domain architecture, TRAM spans 374–436; the sequence is DAKVGTTARV…ANSLRGVLIA (63 aa).

The protein belongs to the methylthiotransferase family. MiaB subfamily. In terms of assembly, monomer. [4Fe-4S] cluster serves as cofactor.

It localises to the cytoplasm. The enzyme catalyses N(6)-dimethylallyladenosine(37) in tRNA + (sulfur carrier)-SH + AH2 + 2 S-adenosyl-L-methionine = 2-methylsulfanyl-N(6)-dimethylallyladenosine(37) in tRNA + (sulfur carrier)-H + 5'-deoxyadenosine + L-methionine + A + S-adenosyl-L-homocysteine + 2 H(+). Catalyzes the methylthiolation of N6-(dimethylallyl)adenosine (i(6)A), leading to the formation of 2-methylthio-N6-(dimethylallyl)adenosine (ms(2)i(6)A) at position 37 in tRNAs that read codons beginning with uridine. The polypeptide is tRNA-2-methylthio-N(6)-dimethylallyladenosine synthase (Dinoroseobacter shibae (strain DSM 16493 / NCIMB 14021 / DFL 12)).